A 189-amino-acid chain; its full sequence is dCTP deaminase, dUMP-forming (189 aa).

DCTP-binding positions include 101–106, Asp119, 127–129, Gln148, Tyr162, and Gln174; these read KSSLGR and TLE. The active-site Proton donor/acceptor is the Glu129. The segment at 166–189 is disordered; the sequence is AVGSKYQGQRGPTPSRSHLNFIKS. Positions 171–189 are enriched in polar residues; the sequence is YQGQRGPTPSRSHLNFIKS.

The protein belongs to the dCTP deaminase family. In terms of assembly, homotrimer.

It carries out the reaction dCTP + 2 H2O = dUMP + NH4(+) + diphosphate. It functions in the pathway pyrimidine metabolism; dUMP biosynthesis; dUMP from dCTP: step 1/1. Bifunctional enzyme that catalyzes both the deamination of dCTP to dUTP and the hydrolysis of dUTP to dUMP without releasing the toxic dUTP intermediate. In Mycolicibacterium smegmatis (strain ATCC 700084 / mc(2)155) (Mycobacterium smegmatis), this protein is dCTP deaminase, dUMP-forming.